Here is a 360-residue protein sequence, read N- to C-terminus: Pyrimidine monooxygenase RutA (360 aa).

Residues 49–50 (IK), asparagine 115, glutamate 124, 140–141 (RY), and serine 190 each bind FMN.

It belongs to the NtaA/SnaA/DszA monooxygenase family. RutA subfamily.

It carries out the reaction uracil + FMNH2 + NADH + O2 = (Z)-3-ureidoacrylate + FMN + NAD(+) + H2O + H(+). The catalysed reaction is thymine + FMNH2 + NADH + O2 = (Z)-2-methylureidoacrylate + FMN + NAD(+) + H2O + H(+). Its function is as follows. Catalyzes the pyrimidine ring opening between N-3 and C-4 by an unusual flavin hydroperoxide-catalyzed mechanism, adding oxygen atoms in the process to yield ureidoacrylate peracid, that immediately reacts with FMN forming ureidoacrylate and FMN-N(5)-oxide. The FMN-N(5)-oxide reacts spontaneously with NADH to produce FMN. Requires the flavin reductase RutF to regenerate FMN in vivo. The sequence is that of Pyrimidine monooxygenase RutA from Bradyrhizobium sp. (strain BTAi1 / ATCC BAA-1182).